A 567-amino-acid chain; its full sequence is MDMDPPTNNPSPPGPPDSPPPEKRLASLSLRTSHLPPDFEIHDDYDDDDDEGYLTAVSRVGSISTSASAWKDDLEDADVAPPSPSSSGYAAERGTSLASSAAANDDPQPQPDDDDWPRDKKHLHEDDTSASWRKRKKHFFILSNSGKPIYSRYGDEHKLAGFSATLQAIISFVENSGDHIKFVRAAKHQIVFLVKGPIYLVCISCTEESYEGLRGQLELMYGQMLLILTKSVNRCFEKNPKFDMAPLLGGTDAVFLSLIHAFSWNPATFLHAYTCLPLAQSTRQAASAVLQDIADSGVLFALLMCEHKVISLVGAQKATLHPDDIFLLSNFILSSESFRTSESFSPICLPRYNSMAFLYAYVHFFDENTYLTLLTARSDAFYDLKDSRSRIQNVLLKANVLVEVQRSLRESALRIEDLPADPSSQSVSPPPQFSQDLHFQLLSSEMAIGGPAGLWHFIYKSIYLDQYVSSEFPLIISNPKQQKRLYKAYQKLYASMHDKATGPHKTQFRRDEDYVLFCWITQDFELYAAFNPLADKSQAIKVCNRVCQWIRDLENEIFVYGESTLSW.

2 disordered regions span residues 1-52 (MDMD…DDEG) and 65-129 (TSAS…DDTS). A compositionally biased stretch (pro residues) spans 7 to 19 (TNNPSPPGPPDSP). The segment covering 43-52 (DDYDDDDDEG) has biased composition (acidic residues).

It belongs to the MON1/SAND family. As to quaternary structure, interacts with CCZ1A, CCZ1B and RABF2B.

It localises to the endosome. The protein localises to the prevacuolar compartment. Functionally, plays an important role in membrane trafficking through the secretory apparatus. In complex with CCZ1, acts as a guanine exchange factor (GEF) for Rab7 protein family. Promotes the exchange of GDP to GTP, converting it from an inactive GDP-bound form into an active GTP-bound form. The active form is involved in protein trafficking from prevacuolar compartments (PVCs) to vacuoles. May serve as a linker between Rab5 and Rab7 protein families in PVCs and mediate PVC maturation. This Oryza sativa subsp. japonica (Rice) protein is Vacuolar fusion protein MON1 homolog.